Reading from the N-terminus, the 117-residue chain is Mini-circle uncharacterized 12.9 kDa protein (117 aa).

The chain is Mini-circle uncharacterized 12.9 kDa protein from Streptomyces coelicolor (strain ATCC BAA-471 / A3(2) / M145).